Here is a 213-residue protein sequence, read N- to C-terminus: Imidazole glycerol phosphate synthase subunit HisH (213 aa).

Residues 4–211 form the Glutamine amidotransferase type-1 domain; it reads NIGLIDYGMG…LAWLKKETKD (208 aa). Cysteine 82 acts as the Nucleophile in catalysis. Residues histidine 186 and glutamate 188 contribute to the active site.

As to quaternary structure, heterodimer of HisH and HisF.

It is found in the cytoplasm. The enzyme catalyses 5-[(5-phospho-1-deoxy-D-ribulos-1-ylimino)methylamino]-1-(5-phospho-beta-D-ribosyl)imidazole-4-carboxamide + L-glutamine = D-erythro-1-(imidazol-4-yl)glycerol 3-phosphate + 5-amino-1-(5-phospho-beta-D-ribosyl)imidazole-4-carboxamide + L-glutamate + H(+). It catalyses the reaction L-glutamine + H2O = L-glutamate + NH4(+). It participates in amino-acid biosynthesis; L-histidine biosynthesis; L-histidine from 5-phospho-alpha-D-ribose 1-diphosphate: step 5/9. In terms of biological role, IGPS catalyzes the conversion of PRFAR and glutamine to IGP, AICAR and glutamate. The HisH subunit catalyzes the hydrolysis of glutamine to glutamate and ammonia as part of the synthesis of IGP and AICAR. The resulting ammonia molecule is channeled to the active site of HisF. This chain is Imidazole glycerol phosphate synthase subunit HisH, found in Prochlorococcus marinus (strain SARG / CCMP1375 / SS120).